The following is a 309-amino-acid chain: Protein FdhE (309 aa).

It belongs to the FdhE family.

The protein localises to the cytoplasm. Functionally, necessary for formate dehydrogenase activity. The sequence is that of Protein FdhE from Escherichia coli (strain K12 / MC4100 / BW2952).